A 422-amino-acid chain; its full sequence is DNA (cytosine-5)-methyltransferase 3-like (422 aa).

A compositionally biased stretch (polar residues) spans 1–11 (MGSRETPSSCS). Residues 1 to 50 (MGSRETPSSCSKTHETLNLETPESSSTDPDSPLEEQWPKSAPDLKEEDSM) form a disordered region. Residues 20–30 (ETPESSSTDPD) are compositionally biased toward low complexity. Residues 76–208 (EVNVNQRNIE…LKAFHDREGA (133 aa)) enclose the ADD domain. The GATA-type; atypical zinc-finger motif lies at 87 to 117 (ICLCCGSLQVYAQHPLFEGGICAPCKDKFLE). The PHD-type; atypical zinc finger occupies 128–184 (QSYCTICCSGHTLFICESPDCTRCYCFECVDILVGPGTSERINAMACWVCFLCLPFS).

In terms of assembly, homodimer. Heterotetramer composed of 1 DNMT3A homodimer and 2 DNMT3L subunits (DNMT3L-DNMT3A-DNMT3A-DNMT3L). Interacts with histone H3 (via N-terminus); interaction is strongly inhibited by methylation at lysine 4 (H3K4me). Interacts with EZH2; the interaction is direct. Interacts with SPOCD1.

The protein localises to the nucleus. Its function is as follows. Catalytically inactive regulatory factor of DNA methyltransferases that can either promote or inhibit DNA methylation depending on the context. Essential for the function of DNMT3A and DNMT3B: activates DNMT3A and DNMT3B by binding to their catalytic domain. Acts by accelerating the binding of DNA and S-adenosyl-L-methionine (AdoMet) to the methyltransferases and dissociates from the complex after DNA binding to the methyltransferases. Recognizes unmethylated histone H3 lysine 4 (H3K4me0) and induces de novo DNA methylation by recruitment or activation of DNMT3. Plays a key role in embryonic stem cells and germ cells. In germ cells, required for the methylation of imprinted loci together with DNMT3A. In male germ cells, specifically required to methylate retrotransposons, preventing their mobilization. Plays a key role in embryonic stem cells (ESCs) by acting both as an positive and negative regulator of DNA methylation. While it promotes DNA methylation of housekeeping genes together with DNMT3A and DNMT3B, it also acts as an inhibitor of DNA methylation at the promoter of bivalent genes. Interacts with the EZH2 component of the PRC2/EED-EZH2 complex, preventing interaction of DNMT3A and DNMT3B with the PRC2/EED-EZH2 complex, leading to maintain low methylation levels at the promoters of bivalent genes. Promotes differentiation of ESCs into primordial germ cells by inhibiting DNA methylation at the promoter of RHOX5, thereby activating its expression. This chain is DNA (cytosine-5)-methyltransferase 3-like (Dnmt3l), found in Rattus norvegicus (Rat).